We begin with the raw amino-acid sequence, 406 residues long: Acetylornithine/succinyldiaminopimelate aminotransferase (406 aa).

Pyridoxal 5'-phosphate contacts are provided by residues Gly-108 to Thr-109 and Phe-141. Arg-144 lines the N(2)-acetyl-L-ornithine pocket. Asp-226 to Gln-229 contacts pyridoxal 5'-phosphate. An N6-(pyridoxal phosphate)lysine modification is found at Lys-255. Residue Ser-283 participates in N(2)-acetyl-L-ornithine binding. Thr-284 is a pyridoxal 5'-phosphate binding site.

This sequence belongs to the class-III pyridoxal-phosphate-dependent aminotransferase family. ArgD subfamily. Homodimer. Requires pyridoxal 5'-phosphate as cofactor.

The protein resides in the cytoplasm. The enzyme catalyses N(2)-acetyl-L-ornithine + 2-oxoglutarate = N-acetyl-L-glutamate 5-semialdehyde + L-glutamate. The catalysed reaction is N-succinyl-(2S,6S)-2,6-diaminopimelate + 2-oxoglutarate = (S)-2-succinylamino-6-oxoheptanedioate + L-glutamate. Its pathway is amino-acid biosynthesis; L-arginine biosynthesis; N(2)-acetyl-L-ornithine from L-glutamate: step 4/4. It functions in the pathway amino-acid biosynthesis; L-lysine biosynthesis via DAP pathway; LL-2,6-diaminopimelate from (S)-tetrahydrodipicolinate (succinylase route): step 2/3. Functionally, involved in both the arginine and lysine biosynthetic pathways. The chain is Acetylornithine/succinyldiaminopimelate aminotransferase from Escherichia coli (strain K12).